Reading from the N-terminus, the 350-residue chain is Ion-translocating oxidoreductase complex subunit D (350 aa).

4 consecutive transmembrane segments (helical) span residues 37 to 57 (YYFGYGTLVQLLLAITVAYLA), 78 to 109 (ALVTASLLAVAIPPLAPWWLIVIGTLFAIVIV), 124 to 144 (AMAAYVLLLISFPVQMTSWVA), and 158 to 178 (TFNSIFQLNAGYAADFFHLAI). The residue at position 185 (Thr-185) is an FMN phosphoryl threonine. Transmembrane regions (helical) follow at residues 212 to 232 (SVGEGWFWVNMAYLVGGLVML), 239 to 259 (WHISGAIVLTLFVCASIGFLI), 264 to 284 (FVSPIMHLFSGGTMLAAFFIA), 298 to 318 (LIFGAMIGLLIYLIRTFGGYP), and 319 to 339 (DAVAFAVLLANMCAPFIDYYV).

This sequence belongs to the NqrB/RnfD family. The complex is composed of six subunits: RnfA, RnfB, RnfC, RnfD, RnfE and RnfG. The cofactor is FMN.

It localises to the cell inner membrane. Functionally, part of a membrane-bound complex that couples electron transfer with translocation of ions across the membrane. This Shewanella frigidimarina (strain NCIMB 400) protein is Ion-translocating oxidoreductase complex subunit D.